We begin with the raw amino-acid sequence, 83 residues long: NAD(P)H-quinone oxidoreductase subunit L (83 aa).

Transmembrane regions (helical) follow at residues 18–38 (ILAYALLGGLYLLVVPLALFF) and 53–73 (LLVYGLVFLFFPGMVVFAPFL).

It belongs to the complex I NdhL subunit family. In terms of assembly, NDH-1 can be composed of about 15 different subunits; different subcomplexes with different compositions have been identified which probably have different functions.

Its subcellular location is the cellular thylakoid membrane. It carries out the reaction a plastoquinone + NADH + (n+1) H(+)(in) = a plastoquinol + NAD(+) + n H(+)(out). The catalysed reaction is a plastoquinone + NADPH + (n+1) H(+)(in) = a plastoquinol + NADP(+) + n H(+)(out). Functionally, NDH-1 shuttles electrons from an unknown electron donor, via FMN and iron-sulfur (Fe-S) centers, to quinones in the respiratory and/or the photosynthetic chain. The immediate electron acceptor for the enzyme in this species is believed to be plastoquinone. Couples the redox reaction to proton translocation, and thus conserves the redox energy in a proton gradient. Cyanobacterial NDH-1 also plays a role in inorganic carbon-concentration. The polypeptide is NAD(P)H-quinone oxidoreductase subunit L (Parasynechococcus marenigrum (strain WH8102)).